A 276-amino-acid chain; its full sequence is NAD kinase (276 aa).

The active-site Proton acceptor is the Asp-61. NAD(+)-binding positions include 61–62 (DG), Arg-66, 135–136 (NE), Arg-146, His-163, Asp-165, and Ala-200.

Belongs to the NAD kinase family. The cofactor is a divalent metal cation.

The protein resides in the cytoplasm. It catalyses the reaction NAD(+) + ATP = ADP + NADP(+) + H(+). Its function is as follows. Involved in the regulation of the intracellular balance of NAD and NADP, and is a key enzyme in the biosynthesis of NADP. Catalyzes specifically the phosphorylation on 2'-hydroxyl of the adenosine moiety of NAD to yield NADP. The polypeptide is NAD kinase (Chloroflexus aggregans (strain MD-66 / DSM 9485)).